We begin with the raw amino-acid sequence, 191 residues long: Calcium and integrin-binding protein 1 (191 aa).

Glycine 2 carries N-myristoyl glycine lipidation. 2 EF-hand domains span residues 103-138 (TPDI…LTGE) and 148-183 (EMKQ…SPDF). Aspartate 116, aspartate 118, aspartate 120, threonine 122, aspartate 127, aspartate 161, aspartate 163, aspartate 165, threonine 167, and glutamate 172 together coordinate Ca(2+).

As to quaternary structure, monomer. Interacts with the heterodimeric integrin alpha-IIb/beta3 (ITGA2B-ITGB3). Interacts with ITGA2B (via cytoplasmic domain); the interaction is direct and calcium-dependent. Interacts with the protein kinases PLK2/SNK and PRKDC (via the region immediately upstream of the kinase domain). Interacts with PLK3; the interaction inhibits PLK3 kinase activity. Interacts with PSEN2. Interacts (via C-terminus) with F8. Interacts with NBR1 (via C-terminus). Interacts with FEZ1 (via C-terminus). Interacts with UBR5 (via C-terminus); the interaction is sensitive to DNA damage, and may target CIB1 for ubiquitin-mediated degradation. Interacts with IFI6; the interaction is direct. Interacts with BCL2. Interacts with ITPR3; the interaction occurs in a calcium dependent manner. Interacts with PTK2/FAK1. Interacts with MAP3K5; the interaction inhibits MAP3K5 activation by phosphorylation, and its subsequent interaction with TRAF2. Interacts (via C-terminal region) with STMN2 (via the N-terminal region); the interaction is direct, occurs in a calcium-dependent manner and attenuates the STMN2-induced neurite outgrowth inhibition. Interacts with SPHK1, the interaction occurs in a calcium-dependent manner. Interacts with ITGA2B (via C-terminal cytoplasmic tail); the interaction occurs upon platelet aggregation and is stabilized/increased in a calcium and magnesium-dependent manner. Interacts with PAK1 (via N-terminal region); the interaction is direct and occurs in a calcium-dependent manner. Interacts with RAC3 (via C-terminal region); the interaction induces their association with the cytoskeleton upon alpha-IIb/beta3 integrin-mediated adhesion. Interacts with ITGA5 and ITGAV. Interacts with MYO1C. Interacts with ITGA2B (via C-terminal cytoplasmic tail region). Interacts (via C-terminal region) with PPP3R1; the interaction increases upon cardiomyocytes hypertrophy. Interacts with CACNA1C; the interaction increases upon cardiomyocytes hypertrophy. Interacts with TAS1R2 (via C-terminus); this interaction is independent of the myristoylation state of CIB1. Interacts and forms a complex with TMC6 and TMC8; the interaction stabilizes each component of the complex. As to expression, expressed in cardiomyocytes and neurons (at protein level). Expressed during early neural development.

The protein resides in the membrane. It is found in the cell membrane. The protein localises to the sarcolemma. Its subcellular location is the apical cell membrane. It localises to the cell projection. The protein resides in the ruffle membrane. It is found in the filopodium tip. The protein localises to the growth cone. Its subcellular location is the lamellipodium. It localises to the cytoplasm. The protein resides in the cytoskeleton. It is found in the microtubule organizing center. The protein localises to the centrosome. Its subcellular location is the perinuclear region. It localises to the nucleus. The protein resides in the neuron projection. It is found in the perikaryon. Its function is as follows. Calcium-binding protein that plays a role in the regulation of numerous cellular processes, such as cell differentiation, cell division, cell proliferation, cell migration, thrombosis, angiogenesis, cardiac hypertrophy and apoptosis. Involved in bone marrow megakaryocyte differentiation by negatively regulating thrombopoietin-mediated signaling pathway. Participates in the endomitotic cell cycle of megakaryocyte, a form of mitosis in which both karyokinesis and cytokinesis are interrupted. Plays a role in integrin signaling by negatively regulating alpha-IIb/beta3 activation in thrombin-stimulated megakaryocytes preventing platelet aggregation. Up-regulates PTK2/FAK1 activity, and is also needed for the recruitment of PTK2/FAK1 to focal adhesions; it thus appears to play an important role in focal adhesion formation. Positively regulates cell migration on fibronectin in a CDC42-dependent manner, the effect being negatively regulated by PAK1. Functions as a negative regulator of stress activated MAP kinase (MAPK) signaling pathways. Down-regulates inositol 1,4,5-trisphosphate receptor-dependent calcium signaling. Involved in sphingosine kinase SPHK1 translocation to the plasma membrane in a N-myristoylation-dependent manner preventing TNF-alpha-induced apoptosis. Regulates serine/threonine-protein kinase PLK3 activity for proper completion of cell division progression. Plays a role in microtubule (MT) dynamics during neuronal development; disrupts the MT depolymerization activity of STMN2 attenuating NGF-induced neurite outgrowth and the MT reorganization at the edge of lamellipodia. Promotes cardiomyocyte hypertrophy via activation of the calcineurin/NFAT signaling pathway. Stimulates calcineurin PPP3R1 activity by mediating its anchoring to the sarcolemma. In ischemia-induced (pathological or adaptive) angiogenesis, stimulates endothelial cell proliferation, migration and microvessel formation by activating the PAK1 and ERK1/ERK2 signaling pathway. Also promotes cancer cell survival and proliferation. May regulate cell cycle and differentiation of spermatogenic germ cells, and/or differentiation of supporting Sertoli cells. Forms a complex with TMC6/EVER1 and TMC8/EVER2 in lymphocytes and keratynocytes where CIB1 stabilizes TMC6 and TMC8 levels and reciprocally. This Rattus norvegicus (Rat) protein is Calcium and integrin-binding protein 1 (Cib1).